Reading from the N-terminus, the 562-residue chain is Sperm-tail PG-rich repeat-containing protein 2 (562 aa).

3 STPGR repeats span residues 21 to 31, 60 to 73, and 96 to 118; these read GPGTYNINRSL, SPGP…ITRN, and PGPG…AKSP. Disordered stretches follow at residues 114–136 and 192–215; these read KAKS…APSI and SGRR…QEDQ. The span at 127–136 shows a compositional bias: low complexity; that stretch reads PSLSPAAPSI. Basic and acidic residues predominate over residues 193 to 202; sequence GRREPLKGAD. 6 STPGR repeats span residues 204-227, 253-271, 336-350, 385-409, 425-462, and 478-492; these read PGPG…VKRE, PGPG…SNTH, TPGP…YGLA, TPGP…TAAF, TPPP…SCFL, and TPGP…KSSS. The interval 543–562 is disordered; the sequence is STRSLSSHRSWRKPTAHSSA. Basic residues predominate over residues 551–562; it reads RSWRKPTAHSSA.

This chain is Sperm-tail PG-rich repeat-containing protein 2 (stpg2), found in Danio rerio (Zebrafish).